The primary structure comprises 435 residues: ATP-dependent protease ATPase subunit HslU (435 aa).

ATP-binding positions include V18, 60–65, D248, E313, and R385; that span reads GVGKTE.

This sequence belongs to the ClpX chaperone family. HslU subfamily. In terms of assembly, a double ring-shaped homohexamer of HslV is capped on each side by a ring-shaped HslU homohexamer. The assembly of the HslU/HslV complex is dependent on binding of ATP.

Its subcellular location is the cytoplasm. In terms of biological role, ATPase subunit of a proteasome-like degradation complex; this subunit has chaperone activity. The binding of ATP and its subsequent hydrolysis by HslU are essential for unfolding of protein substrates subsequently hydrolyzed by HslV. HslU recognizes the N-terminal part of its protein substrates and unfolds these before they are guided to HslV for hydrolysis. In Xanthobacter autotrophicus (strain ATCC BAA-1158 / Py2), this protein is ATP-dependent protease ATPase subunit HslU.